The following is a 361-amino-acid chain: Serpentine receptor class X 45 (361 aa).

Transmembrane regions (helical) follow at residues 20–40 (LLIF…AFYI), 58–78 (AAGD…VLFF), 92–112 (FAQL…VISL), 133–153 (TTFL…FLVI), 176–196 (MINV…MFAI), 242–262 (LLYV…PVPL), and 278–298 (LLTT…TLIF). Residue N317 is glycosylated (N-linked (GlcNAc...) asparagine).

Belongs to the G-protein coupled receptor 1 family.

Its subcellular location is the cell membrane. The sequence is that of Serpentine receptor class X 45 (srx-45) from Caenorhabditis elegans.